The following is a 962-amino-acid chain: MDEQALLGLNPNADSDFRQRALAYFEQLKISPDAWQVCAEALAQRTYSDDHVKFFCFQVLEHQVKYKYSELTTVQQQLIRETLISWLQAQMLNPQPEKTFIRNKAAQVFALLFVTEYLTKWPKFFFDILSVVDLNPRGVDLYLRILMAIDSELVDRDVVHTSEEARRNTLIKDTMREQCIPNLVESWYQILQNYQFTNSEVTCQCLEVVGAYVSWIDLSLIANDRFINMLLGHMSIEVLREEACDCLFEVVNKGMDPVDKMKLVESLCQVLQSAGFFSIDQEEDVDFLARFSKLVNGMGQSLIVSWSKLIKNGDIKNAQEALQAIETKVALMLQLLIHEDDDISSNIIGFCYDYLHILKQLTVLSDQQKANVEAIMLAVMKKLTYDEEYNFENEGEDEAMFVEYRKQLKLLLDRLAQVSPELLLASVRRVFSSTLQNWQTTRFMEVEVAIRLLYMLAEALPVSHGAHFSGDVSKASALQDMMRTLVTSGVSSYQHTSVTLEFFETVVRYEKFFTVEPQHIPCVLMAFLDHRGLRHSSAKVRSRTAYLFSRFVKSLNKQMNPFIEDILNRIQDLLELSPPENGHQSLLSSDDQLFIYETAGVLIVNSEYPAERKQALMRNLLTPLMEKFKILLEKLMLAQDEERQASLADCLNHAVGFASRTSKAFSNKQTVKQCGCSEVYLDCLQTFLPALSCPLQKDILRSGVRTFLHRMIICLEEEVLPFIPSASEHMLKDCEAKDLQEFIPLINQITAKFKIQVSPFLQQMFMPLLHAIFEVLLRPAEENDQSAALEKQMLRRSYFAFLQTVTGSGMSEVIANQGAENVERVLVTVIQGAVEYPDPIAQKTCFIILSKLVELWGGKDGPVGFADFVYKHIVPACFLAPLKQTFDLADAQTVLALSECAVTLKTIHLKRGPECVQYLQQEYLPSLQVAPEIIQEFCQALQQPDAKVFKNYLKVFFQRAKP.

The residue at position 1 (methionine 1) is an N-acetylmethionine. The tract at residues 1-385 (MDEQALLGLN…MLAVMKKLTY (385 aa)) is necessary for interaction with Ran, nuclear localization and nuclear import. Residues 443 to 962 (FMEVEVAIRL…LKVFFQRAKP (520 aa)) are necessary for tRNA-binding, cytoplasmic localization and nuclear export. The residue at position 634 (lysine 634) is an N6-acetyllysine.

Belongs to the exportin family. Found in a complex with XPOT, Ran and tRNA. Probably found in a complex with nucleoporins. Interacts with Ran and tRNA in a GTP-dependent manner.

The protein localises to the nucleus. It is found in the cytoplasm. Mediates the nuclear export of aminoacylated tRNAs. In the nucleus binds to tRNA and to the GTPase Ran in its active GTP-bound form. Docking of this trimeric complex to the nuclear pore complex (NPC) is mediated through binding to nucleoporins. Upon transit of a nuclear export complex into the cytoplasm, disassembling of the complex and hydrolysis of Ran-GTP to Ran-GDP (induced by RANBP1 and RANGAP1, respectively) cause release of the tRNA from the export receptor. XPOT then return to the nuclear compartment and mediate another round of transport. The directionality of nuclear export is thought to be conferred by an asymmetric distribution of the GTP- and GDP-bound forms of Ran between the cytoplasm and nucleus. The polypeptide is Exportin-T (XPOT) (Homo sapiens (Human)).